Consider the following 210-residue polypeptide: Meiotic coiled-coil protein 7 (210 aa).

Residues 77 to 148 are a coiled coil; that stretch reads KRSRESVLGS…LKTQLSNLNH (72 aa).

The protein belongs to the MND1 family. As to quaternary structure, interacts with meu13.

The protein resides in the cytoplasm. It localises to the nucleus. Its function is as follows. Required for meiotic recombination. This is Meiotic coiled-coil protein 7 (mcp7) from Schizosaccharomyces pombe (strain 972 / ATCC 24843) (Fission yeast).